A 36-amino-acid chain; its full sequence is U14-myrmicitoxin-Tb1a (36 aa).

An N-terminal signal peptide occupies residues 1–23 (MKIIKLITIFTMMATLMXXVANG). A propeptide spanning residues 24–25 (EP) is cleaved from the precursor. Gln-35 is subject to Glutamine amide.

As to expression, expressed by the venom gland.

Its subcellular location is the secreted. Functionally, venom protein with unknown function. Does not induce paralysis when a high dose is administered by intrathoracic injection into the blowfly Lucilia caesar. This Tetramorium bicarinatum (Tramp ant) protein is U14-myrmicitoxin-Tb1a.